A 286-amino-acid chain; its full sequence is Bifunctional protein FolD (286 aa).

Residues 164 to 166 (GRS), S193, and I234 contribute to the NADP(+) site.

It belongs to the tetrahydrofolate dehydrogenase/cyclohydrolase family. Homodimer.

The catalysed reaction is (6R)-5,10-methylene-5,6,7,8-tetrahydrofolate + NADP(+) = (6R)-5,10-methenyltetrahydrofolate + NADPH. It catalyses the reaction (6R)-5,10-methenyltetrahydrofolate + H2O = (6R)-10-formyltetrahydrofolate + H(+). It functions in the pathway one-carbon metabolism; tetrahydrofolate interconversion. Functionally, catalyzes the oxidation of 5,10-methylenetetrahydrofolate to 5,10-methenyltetrahydrofolate and then the hydrolysis of 5,10-methenyltetrahydrofolate to 10-formyltetrahydrofolate. The protein is Bifunctional protein FolD of Oleidesulfovibrio alaskensis (strain ATCC BAA-1058 / DSM 17464 / G20) (Desulfovibrio alaskensis).